The primary structure comprises 149 residues: Small ribosomal subunit protein bS6 (149 aa).

The disordered stretch occupies residues 94–149; sequence EKHEEGPSAMMQKRDRDDRPRRDGDRPDRGGFGDRGPRPDRGDRDDRPRRPREDRA.

It belongs to the bacterial ribosomal protein bS6 family.

In terms of biological role, binds together with bS18 to 16S ribosomal RNA. This is Small ribosomal subunit protein bS6 from Sinorhizobium fredii (strain NBRC 101917 / NGR234).